We begin with the raw amino-acid sequence, 743 residues long: MMNMKIVLFSLLLFVIRWNIISCNKNDKNQGVDMNVLNNYENLFKFVKCEYCNEHTYVKGKKAPSDPQCADIKEECKELLKEKQYTDSVTYLMDGFKSANNSANNGKKNNAEEMKNLVNFLQSHKKLIKALKKNIESIQNKKHLIYKNKSYNPLLLSCVKKMNMLKENVDYIQKNQNLFKELMNQKATYSFVNTKKKIISLKSQGHKKETSQNQNENNDNQKYQEVNDEDDVNDEEDTNDDEDTNDEEDTNDDEDTNDDEDTNDEEDTNDEEDHENNNATAYELGIVPVNDVLNVNMKNMITGNNFMDVVKNTLAQSGGLGSNDLINFLNQGKEIGENLLNITKMNLGDKNNLESFPLDELNMLKDNLINYEFILDNLKTSVLNKLKDLLLRLLYKAYVSYKKRKAQEKGLPEPTVTNEEYVEELKKGILDMGIKLLFSKVKSLLKKLKNKIFPKKKEDNQAVDTKSMEEPKVKAQPALRGVEPTEDSNIMNSINNVMDEIDFFEKELIENNNTPNVVPPTQSKKKNKNETVSGMDENFDNHPENYFKEEYYYDENDDMEVKVKKIGVTLKKFEPLKNGNVSETIKLIHLGNKDKKHIEAINNDIQIIKQELQAIYNELMNYTNGNKNIQQIFQQNILENDVLNQETEEEMEKQVEAITKQIEAEVDALAPKNKEEEEKEKEKEEKEKEEKEKEKEEKEKEEKEKEEKEKEEKEEEKKEKEEEQEEEEEEEIVPENLTTEESK.

Residues 1-23 (MMNMKIVLFSLLLFVIRWNIISC) form the signal peptide. Residues 77–235 (KELLKEKQYT…VNDEDDVNDE (159 aa)) are interaction with MSP1 and host SLC4A1/Band 3. 4 disordered regions span residues 202–282 (KSQG…ATAY), 459–487 (DNQAVDTKSMEEPKVKAQPALRGVEPTED), 512–540 (NNTPNVVPPTQSKKKNKNETVSGMDENFD), and 666–743 (VDAL…EESK). Residues 211–224 (SQNQNENNDNQKYQ) show a composition bias toward polar residues. Repeat copies occupy residues 226–231 (VNDEDD), 232–237 (VNDEED), 238–243 (TNDDED), 244–249 (TNDEED), 250–255 (TNDDED), 256–261 (TNDDED), 262–267 (TNDEED), and 268–273 (TNDEED). The 8 X 6 AA tandem repeats of [VT]-N-D-[ED]-[ED]-D stretch occupies residues 226-273 (VNDEDDVNDEEDTNDDEDTNDEEDTNDDEDTNDDEDTNDEEDTNDEED). Positions 226 to 274 (VNDEDDVNDEEDTNDDEDTNDEEDTNDDEDTNDDEDTNDEEDTNDEEDH) are enriched in acidic residues. Positions 364 to 528 (LKDNLINYEF…PPTQSKKKNK (165 aa)) are interaction with MSP1 and host SLC4A1/Band 3. Residues 459–473 (DNQAVDTKSMEEPKV) show a composition bias toward basic and acidic residues. A compositionally biased stretch (low complexity) spans 512–521 (NNTPNVVPPT). A coiled-coil region spans residues 644–733 (NQETEEEMEK…QEEEEEEEIV (90 aa)). Residues 672–721 (KNKEEEEKEKEKEEKEKEEKEKEKEEKEKEEKEKEEKEKEEKEEEKKEKE) are compositionally biased toward basic and acidic residues. Positions 722-733 (EEQEEEEEEEIV) are enriched in acidic residues.

The protein belongs to the plasmodium ABRA family. In terms of assembly, forms a complex composed of MSP1, MSP6, MSP7, MSP9 and MSP3; within the complex, MSP6 and MSP9 mediate the binding to the host erythrocyte. Interacts with MSP1 subunits p19 and p42; the interaction is direct. Interacts with host SLC4A1/Band 3 protein (via the 5ABC region). MSP1 subunits p19 or p42, and MSP9 form a co-ligand complex that interacts with host SLC4A1/Band 3 protein. Not glycosylated.

It is found in the cell membrane. The protein localises to the parasitophorous vacuole lumen. It localises to the secreted. In terms of biological role, during the asexual blood stage, involved in the sialic acid-independent (SAID) merozoite invasion of host erythrocytes by binding to host SLC4A1/Band 3 protein on the surface of the host erythrocyte. This Plasmodium falciparum (isolate 3D7) protein is Merozoite surface protein 9.